The sequence spans 157 residues: UPF0262 protein Avi_0642 (157 aa).

The protein belongs to the UPF0262 family.

The sequence is that of UPF0262 protein Avi_0642 from Allorhizobium ampelinum (strain ATCC BAA-846 / DSM 112012 / S4) (Agrobacterium vitis (strain S4)).